The following is a 222-amino-acid chain: Nucleoside triphosphate pyrophosphatase (222 aa).

Residue aspartate 82 is the Proton acceptor of the active site.

This sequence belongs to the Maf family. A divalent metal cation is required as a cofactor.

It is found in the cytoplasm. The catalysed reaction is a ribonucleoside 5'-triphosphate + H2O = a ribonucleoside 5'-phosphate + diphosphate + H(+). It catalyses the reaction a 2'-deoxyribonucleoside 5'-triphosphate + H2O = a 2'-deoxyribonucleoside 5'-phosphate + diphosphate + H(+). Functionally, nucleoside triphosphate pyrophosphatase. May have a dual role in cell division arrest and in preventing the incorporation of modified nucleotides into cellular nucleic acids. This chain is Nucleoside triphosphate pyrophosphatase, found in Mycobacterium tuberculosis (strain ATCC 25177 / H37Ra).